Consider the following 245-residue polypeptide: Triosephosphate isomerase (245 aa).

Residue 9–11 participates in substrate binding; the sequence is NWK. The active-site Electrophile is the H92. Catalysis depends on E164, which acts as the Proton acceptor. Residues G170, S209, and 230–231 contribute to the substrate site; that span reads GG.

It belongs to the triosephosphate isomerase family. Homodimer.

It localises to the cytoplasm. It catalyses the reaction D-glyceraldehyde 3-phosphate = dihydroxyacetone phosphate. Its pathway is carbohydrate biosynthesis; gluconeogenesis. It functions in the pathway carbohydrate degradation; glycolysis; D-glyceraldehyde 3-phosphate from glycerone phosphate: step 1/1. Functionally, involved in the gluconeogenesis. Catalyzes stereospecifically the conversion of dihydroxyacetone phosphate (DHAP) to D-glyceraldehyde-3-phosphate (G3P). The sequence is that of Triosephosphate isomerase from Cupriavidus pinatubonensis (strain JMP 134 / LMG 1197) (Cupriavidus necator (strain JMP 134)).